The following is a 450-amino-acid chain: FAD-linked oxidoreductase penO (450 aa).

Residues 32–203 (PPELPYAIVK…TRFFIRTRPA (172 aa)) form the FAD-binding PCMH-type domain.

This sequence belongs to the oxygen-dependent FAD-linked oxidoreductase family. FAD is required as a cofactor.

The protein operates within secondary metabolite biosynthesis. Functionally, FAD-linked oxidoreductase; part of the gene cluster that mediates the biosynthesis of the indole diterpenes penitrems. The geranylgeranyl diphosphate (GGPP) synthase penG catalyzes the first step in penitrem biosynthesis via conversion of farnesyl pyrophosphate and isopentyl pyrophosphate into geranylgeranyl pyrophosphate (GGPP). Condensation of indole-3-glycerol phosphate with GGPP by the prenyl transferase penC then forms 3-geranylgeranylindole (3-GGI). Epoxidation by the FAD-dependent monooxygenase penM leads to a epoxidized-GGI that is substrate of the terpene cyclase penB for cyclization to yield paspaline. Paspaline is subsequently converted to 13-desoxypaxilline by the cytochrome P450 monooxygenase penP, the latter being then converted to paxilline by the cytochrome P450 monooxygenase penQ. Paxilline is converted to beta-paxitriol via C-10 ketoreduction by the short-chain dehydrogenase PC-15 which can be monoprenylated at the C-20 by the indole diterpene prenyltransferase penD. A two-step elimination (acetylation and elimination) process performed by the O-acetyltransferase PC-16 and the P.simplicissimum ptmI-ortholog not yet identified in P.crustosum, leads to the production of the prenylated form of penijanthine. The FAD-linked oxidoreductase ptmO then converts the prenylated form of penijanthine into PC-M5 which is in turn transformed into PC-M4 by the aromatic dimethylallyltransferase PC-22. A series of oxidation steps involving 4 cytochrome P450 monooxygenases (PC-21, PC-05, PC-23, PC-20) and a FAD-dependent monooxygenase (PC-14) are required for the transformation of PC-M4 to penitrems A and E. Synthesis of these final products is proposed to proceed via penitrems D and C (PC-21, PC-05, PC-14) and penitrems B and F (PC-21, PC-05, PC-14, PC-23). The sequence is that of FAD-linked oxidoreductase penO from Penicillium crustosum (Blue mold fungus).